The following is a 583-amino-acid chain: Threonine--tRNA ligase (583 aa).

Residues 185-478 (DHRKLGRELD…LVEHYGGAFP (294 aa)) are catalytic. 3 residues coordinate Zn(2+): Cys-278, His-329, and His-455.

Belongs to the class-II aminoacyl-tRNA synthetase family. Homodimer. It depends on Zn(2+) as a cofactor.

It localises to the cytoplasm. It carries out the reaction tRNA(Thr) + L-threonine + ATP = L-threonyl-tRNA(Thr) + AMP + diphosphate + H(+). Functionally, catalyzes the attachment of threonine to tRNA(Thr) in a two-step reaction: L-threonine is first activated by ATP to form Thr-AMP and then transferred to the acceptor end of tRNA(Thr). Also edits incorrectly charged L-seryl-tRNA(Thr). This Borrelia hermsii (strain HS1 / DAH) protein is Threonine--tRNA ligase.